The following is a 498-amino-acid chain: UPF0371 protein cauri_2449 (498 aa).

This sequence belongs to the UPF0371 family.

In Corynebacterium aurimucosum (strain ATCC 700975 / DSM 44827 / CIP 107346 / CN-1) (Corynebacterium nigricans), this protein is UPF0371 protein cauri_2449.